Here is a 195-residue protein sequence, read N- to C-terminus: MRVAQVVRNTSETQISVKIDLDGTGRQKLATGVPFLDHMLDQIARHGLVDLDIEAHGDTHIDDHHTVEDVGITLGQAVAKAVGDRKGIRRYGHSYVPLDEALSRVVIDFSGRPGLEFHVPFTRARIGTFDVDLSIEFFRGFVNHAGVTLHIDNLRGVNAHHQLETVFKAFGRALRMAVELDERAAGQIPSTKGSL.

The protein belongs to the imidazoleglycerol-phosphate dehydratase family.

Its subcellular location is the cytoplasm. The catalysed reaction is D-erythro-1-(imidazol-4-yl)glycerol 3-phosphate = 3-(imidazol-4-yl)-2-oxopropyl phosphate + H2O. Its pathway is amino-acid biosynthesis; L-histidine biosynthesis; L-histidine from 5-phospho-alpha-D-ribose 1-diphosphate: step 6/9. The protein is Imidazoleglycerol-phosphate dehydratase of Burkholderia mallei (strain NCTC 10247).